Consider the following 353-residue polypeptide: C-X-C chemokine receptor type 4 (353 aa).

The segment at 1–22 (MEGIRIFTSDNYTEDDLGSGDY) is important for chemokine binding and signaling. The Extracellular portion of the chain corresponds to 1–39 (MEGIRIFTSDNYTEDDLGSGDYDSMKEPCFREENAHFNR). Residue Asn11 is glycosylated (N-linked (GlcNAc...) asparagine). Tyr12 bears the Sulfotyrosine mark. O-linked (Xyl...) (chondroitin sulfate) serine glycosylation is present at Ser19. Tyr22 carries the post-translational modification Sulfotyrosine. 2 cysteine pairs are disulfide-bonded: Cys29–Cys275 and Cys110–Cys187. Residues 40–64 (IFLPTVYSIIFLTGIVGNGLVILVM) form a helical membrane-spanning segment. Residues 65–78 (GYQKKLRSMTDKYR) are Cytoplasmic-facing. The helical transmembrane segment at 79–100 (LHLSVADLLFVLTLPFWAVDAV) threads the bilayer. Residues 95 to 98 (WAVD) form a chemokine binding region. Topologically, residues 101 to 111 (ANWYFGKFLCK) are extracellular. Residues 112–131 (AVHVIYTVNLYSSVLILAFI) traverse the membrane as a helical segment. Residues 114-118 (HVIYT) form a chemokine binding region. Over 132–155 (SLDRYLAIVHATNSQKPRKLLAEK) the chain is Cytoplasmic. An Important for signaling motif is present at residues 134–136 (DRY). The interval 136–148 (YLAIVHATNSQKP) is involved in dimerization; when bound to chemokine. Residues 156-175 (VVYVGVWLPAVLLTIPDLIF) traverse the membrane as a helical segment. Residues 176–196 (ADIKEVDERYICDRFYPSDLW) lie on the Extracellular side of the membrane. The tract at residues 187–191 (CDRFY) is chemokine binding, important for signaling. Residues 192–211 (PSDLWLVVFQFQHIVVGLLL) form an involved in dimerization region. Residues 197–217 (LVVFQFQHIVVGLLLPGIVIL) form a helical membrane-spanning segment. Over 218–242 (SCYCIIISKLSHSKGYQKRKALKTT) the chain is Cytoplasmic. A helical membrane pass occupies residues 243–262 (VILILTFFACWLPYYIGISI). Over 263 to 283 (DSFILLEIIQQGCEFESTVHK) the chain is Extracellular. The segment at 267-269 (LLE) is involved in dimerization. Residues 284–303 (WISITEALAFFHCCLNPILY) form a helical membrane-spanning segment. Topologically, residues 304 to 353 (AFLGAKFKTSAQHALTSVSRGSSLKILSKGKRGGHSSVSTESESSSFHSS) are cytoplasmic. Residues Ser320 and Ser322 each carry the phosphoserine modification. Phosphoserine; by PKC and GRK6 is present on residues Ser325 and Ser326. Residues 330–353 (LSKGKRGGHSSVSTESESSSFHSS) form a disordered region. Ser331 bears the Phosphoserine; by GRK6 mark. Lys332 participates in a covalent cross-link: Glycyl lysine isopeptide (Lys-Gly) (interchain with G-Cter in ubiquitin). The span at 338-353 (HSSVSTESESSSFHSS) shows a compositional bias: low complexity. At Ser340 the chain carries Phosphoserine; by GRK6. Phosphoserine occurs at positions 349 and 352.

This sequence belongs to the G-protein coupled receptor 1 family. In terms of assembly, monomer. Can form homodimers. Interacts with CD164. Interacts with ARRB2; the interaction is dependent on the C-terminal phosphorylation of CXCR4 and allows activation of MAPK1 and MAPK3. Interacts with ARR3; the interaction is dependent on the C-terminal phosphorylation of CXCR4 and modulates calcium mobilization. Interacts with RNF113A; the interaction, enhanced by CXCL12, promotes CXCR4 ubiquitination and subsequent degradation. Interacts (via the cytoplasmic C-terminal) with ITCH (via the WW domains I and II); the interaction, enhanced by CXCL12, promotes CXCR4 ubiquitination and leads to its degradation. Interacts with extracellular ubiquitin. Interacts with DBN1; this interaction is enhanced by antigenic stimulation. Following LPS binding, may form a complex with GDF5, HSP90AA1 and HSPA8. In terms of processing, phosphorylated on agonist stimulation. Rapidly phosphorylated on serine and threonine residues in the C-terminal. Phosphorylation at Ser-325 and Ser-326 leads to recruitment of ITCH, ubiquitination and protein degradation. Post-translationally, ubiquitinated after ligand binding, leading to its degradation. Ubiquitinated by ITCH at the cell membrane on agonist stimulation. The ubiquitin-dependent mechanism, endosomal sorting complex required for transport (ESCRT), then targets CXCR4 for lysosomal degradation. This process is dependent also on prior Ser-/Thr-phosphorylation in the C-terminal of CXCR4. Also binding of ARRB1 to STAM negatively regulates CXCR4 sorting to lysosomes though modulating ubiquitination of SFR5S. Sulfation is required for efficient binding of CXCL12/SDF-1alpha and promotes its dimerization. In terms of processing, O- and N-glycosylated. N-glycosylation can mask coreceptor function. The O-glycosylation chondroitin sulfate attachment does not affect interaction with CXCL12/SDF-1alpha nor its coreceptor activity. As to expression, brain, heart, kidney, lung and liver.

It is found in the cell membrane. It localises to the cell junction. The protein localises to the early endosome. The protein resides in the late endosome. Its subcellular location is the lysosome. Receptor for the C-X-C chemokine CXCL12/SDF-1 that transduces a signal by increasing intracellular calcium ion levels and enhancing MAPK1/MAPK3 activation. Involved in the AKT signaling cascade. Plays a role in regulation of cell migration, e.g. during wound healing. Acts as a receptor for extracellular ubiquitin; leading to enhanced intracellular calcium ions and reduced cellular cAMP levels. Binds bacterial lipopolysaccharide (LPS) et mediates LPS-induced inflammatory response, including TNF secretion by monocytes. Involved in hematopoiesis and in cardiac ventricular septum formation. Also plays an essential role in vascularization of the gastrointestinal tract, probably by regulating vascular branching and/or remodeling processes in endothelial cells. Involved in cerebellar development. In the CNS, could mediate hippocampal-neuron survival. The polypeptide is C-X-C chemokine receptor type 4 (CXCR4) (Bos taurus (Bovine)).